A 419-amino-acid polypeptide reads, in one-letter code: Multifunctional CCA protein (419 aa).

Positions 8 and 11 each coordinate ATP. Positions 8 and 11 each coordinate CTP. 2 residues coordinate Mg(2+): Asp21 and Asp23. The ATP site is built by Arg91, Arg137, and Arg140. CTP-binding residues include Arg91, Arg137, and Arg140. The 102-residue stretch at Thr226–Trp327 folds into the HD domain.

The protein belongs to the tRNA nucleotidyltransferase/poly(A) polymerase family. Bacterial CCA-adding enzyme type 1 subfamily. As to quaternary structure, monomer. Can also form homodimers and oligomers. Mg(2+) is required as a cofactor. Ni(2+) serves as cofactor.

The catalysed reaction is a tRNA precursor + 2 CTP + ATP = a tRNA with a 3' CCA end + 3 diphosphate. The enzyme catalyses a tRNA with a 3' CCA end + 2 CTP + ATP = a tRNA with a 3' CCACCA end + 3 diphosphate. In terms of biological role, catalyzes the addition and repair of the essential 3'-terminal CCA sequence in tRNAs without using a nucleic acid template. Adds these three nucleotides in the order of C, C, and A to the tRNA nucleotide-73, using CTP and ATP as substrates and producing inorganic pyrophosphate. tRNA 3'-terminal CCA addition is required both for tRNA processing and repair. Also involved in tRNA surveillance by mediating tandem CCA addition to generate a CCACCA at the 3' terminus of unstable tRNAs. While stable tRNAs receive only 3'-terminal CCA, unstable tRNAs are marked with CCACCA and rapidly degraded. This Leptothrix cholodnii (strain ATCC 51168 / LMG 8142 / SP-6) (Leptothrix discophora (strain SP-6)) protein is Multifunctional CCA protein.